Consider the following 135-residue polypeptide: Probable histone H2A.8 (135 aa).

The protein belongs to the histone H2A family. In terms of assembly, the nucleosome is a histone octamer containing two molecules each of H2A, H2B, H3 and H4 assembled in one H3-H4 heterotetramer and two H2A-H2B heterodimers. The octamer wraps approximately 147 bp of DNA.

The protein resides in the nucleus. Its subcellular location is the chromosome. In terms of biological role, core component of nucleosome. Nucleosomes wrap and compact DNA into chromatin, limiting DNA accessibility to the cellular machineries which require DNA as a template. Histones thereby play a central role in transcription regulation, DNA repair, DNA replication and chromosomal stability. DNA accessibility is regulated via a complex set of post-translational modifications of histones, also called histone code, and nucleosome remodeling. In Oryza sativa subsp. indica (Rice), this protein is Probable histone H2A.8.